The following is a 128-amino-acid chain: C-C motif chemokine 28 (128 aa).

An N-terminal signal peptide occupies residues 1–24; it reads MQQTGLTLALVALAVCVALPSSEA. Intrachain disulfides connect Cys32-Cys60 and Cys33-Cys75. The segment at 89–128 is disordered; it reads EQAAKKNTKGNICHKKQAGKRKSKGAHQEKPEIHSHKSPY. Residues 94-113 are compositionally biased toward basic residues; the sequence is KNTKGNICHKKQAGKRKSKG. The segment covering 114–128 has biased composition (basic and acidic residues); the sequence is AHQEKPEIHSHKSPY.

The protein belongs to the intercrine beta (chemokine CC) family.

It is found in the secreted. Chemotactic activity for resting CD4, CD8 T-cells and eosinophils. Binds to CCR3 and CCR10 and induces calcium mobilization in a dose-dependent manner. The chain is C-C motif chemokine 28 (CCL28) from Canis lupus familiaris (Dog).